The sequence spans 851 residues: Phosphatidate phosphatase LPIN3 (851 aa).

Residues 1 to 108 (MNYVGQLAET…VPPGLCTSPI (108 aa)) are N-LIP. Disordered stretches follow at residues 114–385 (SGFP…YLDD) and 400–432 (QSDSGLGARRWSEPSSQKSLRDPNPEHEPEPTL). Over residues 140 to 151 (GRRKRRRRRKPK) the composition is skewed to basic residues. A Nuclear localization signal motif is present at residues 141-148 (RRKRRRRR). Thr159 bears the Phosphothreonine mark. Phosphoserine is present on residues Ser161, Ser162, and Ser224. The span at 268-286 (GRAGATSPPRGGPSTPSTS) shows a compositional bias: low complexity. The segment covering 418–429 (SLRDPNPEHEPE) has biased composition (basic and acidic residues). A Phosphoserine modification is found at Ser463. Basic and acidic residues predominate over residues 542-559 (SAQKEKTAAKEQQGEKTE). A disordered region spans residues 542-591 (SAQKEKTAAKEQQGEKTEVLSSDDDAPDSPVILEIPSLPPSTPPSTPTYK). Over residues 578–587 (SLPPSTPPST) the composition is skewed to pro residues. Residues 590–792 (YKKSLRLSSD…RIFTVNPRGE (203 aa)) form a C-LIP region. A DXDXT motif motif is present at residues 644-648 (DIDGT). The LXXIL motif signature appears at 655–659 (LGHIL).

This sequence belongs to the lipin family. The cofactor is Mg(2+). In terms of tissue distribution, significant expression in intestine and other regions of the gastrointestinal tract.

Its subcellular location is the nucleus. The enzyme catalyses a 1,2-diacyl-sn-glycero-3-phosphate + H2O = a 1,2-diacyl-sn-glycerol + phosphate. Inhibited by N-ethylmaleimide. In terms of biological role, magnesium-dependent phosphatidate phosphatase enzyme which catalyzes the conversion of phosphatidic acid to diacylglycerol during triglyceride, phosphatidylcholine and phosphatidylethanolamine biosynthesis therefore regulates fatty acid metabolism. In Homo sapiens (Human), this protein is Phosphatidate phosphatase LPIN3.